Here is a 104-residue protein sequence, read N- to C-terminus: Fluoride-specific ion channel FluC 2 (104 aa).

Helical transmembrane passes span 22 to 42 (IGPY…LAAV), 48 to 68 (LVMA…STLA), and 82 to 102 (MLLG…WCGL). Gly-59 and Ser-62 together coordinate Na(+).

The protein belongs to the fluoride channel Fluc/FEX (TC 1.A.43) family.

It is found in the cell membrane. The catalysed reaction is fluoride(in) = fluoride(out). Its activity is regulated as follows. Na(+) is not transported, but it plays an essential structural role and its presence is essential for fluoride channel function. Functionally, fluoride-specific ion channel. Important for reducing fluoride concentration in the cell, thus reducing its toxicity. This Corynebacterium diphtheriae (strain ATCC 700971 / NCTC 13129 / Biotype gravis) protein is Fluoride-specific ion channel FluC 2.